Reading from the N-terminus, the 215-residue chain is Adenylate kinase (215 aa).

10–15 (GAGKGT) is an ATP binding site. The interval 30-59 (STGDMFRAAIKDQTPLGQEAKSYMDKGELV) is NMP. AMP contacts are provided by residues Thr31, Arg36, 57-59 (ELV), 85-88 (GFPR), and Gln92. The LID stretch occupies residues 126–163 (GRRICPTCGATYHVIYNPPKVEGVCDIDGSALVQREDD). Arg127 lines the ATP pocket. The Zn(2+) site is built by Cys130 and Cys133. 136-137 (TY) provides a ligand contact to ATP. Cys150 and Asp153 together coordinate Zn(2+). AMP is bound by residues Arg160 and Arg171. An ATP-binding site is contributed by Arg199.

It belongs to the adenylate kinase family. As to quaternary structure, monomer.

The protein resides in the cytoplasm. It catalyses the reaction AMP + ATP = 2 ADP. It participates in purine metabolism; AMP biosynthesis via salvage pathway; AMP from ADP: step 1/1. Its function is as follows. Catalyzes the reversible transfer of the terminal phosphate group between ATP and AMP. Plays an important role in cellular energy homeostasis and in adenine nucleotide metabolism. The protein is Adenylate kinase of Exiguobacterium sibiricum (strain DSM 17290 / CCUG 55495 / CIP 109462 / JCM 13490 / 255-15).